The primary structure comprises 155 residues: Cytochrome c-type biogenesis protein CcmE (155 aa).

The Cytoplasmic segment spans residues 1 to 8 (MNPVRKKR). A helical; Signal-anchor for type II membrane protein membrane pass occupies residues 9 to 29 (LFIVLAILAGVGIAVALALSA). Residues 30-155 (LQQNINLFYT…YEGGKQEYAK (126 aa)) lie on the Periplasmic side of the membrane. Heme is bound by residues His124 and Tyr128.

Belongs to the CcmE/CycJ family.

The protein resides in the cell inner membrane. Functionally, heme chaperone required for the biogenesis of c-type cytochromes. Transiently binds heme delivered by CcmC and transfers the heme to apo-cytochromes in a process facilitated by CcmF and CcmH. The protein is Cytochrome c-type biogenesis protein CcmE of Stutzerimonas stutzeri (strain A1501) (Pseudomonas stutzeri).